The primary structure comprises 391 residues: Probable protein phosphatase 2C 32 (391 aa).

Positions 1–53 (MSCTVAIPSSPVFSPSRRPLSCKAASASASPESVSVAASSPAQAAPPAGSPLR) are disordered. Residues 8 to 51 (PSSPVFSPSRRPLSCKAASASASPESVSVAASSPAQAAPPAGSP) show a composition bias toward low complexity. A helical membrane pass occupies residues 95–115 (LVVPVCGGAAAAAAAAAVAAV). In terms of domain architecture, PPM-type phosphatase spans 129–386 (EFAVYCRRGK…DDISIVIIQL (258 aa)). 4 residues coordinate Mn(2+): D168, G169, D332, and D377.

This sequence belongs to the PP2C family. Requires Mg(2+) as cofactor. Mn(2+) serves as cofactor.

The protein resides in the membrane. It catalyses the reaction O-phospho-L-seryl-[protein] + H2O = L-seryl-[protein] + phosphate. It carries out the reaction O-phospho-L-threonyl-[protein] + H2O = L-threonyl-[protein] + phosphate. The polypeptide is Probable protein phosphatase 2C 32 (Oryza sativa subsp. japonica (Rice)).